Here is a 614-residue protein sequence, read N- to C-terminus: ATP-dependent zinc metalloprotease FtsH (614 aa).

Residues 1 to 7 (MKKQWKK) are Stromal-facing. A helical transmembrane segment spans residues 8-28 (IVLFVLPVIITLITLSSFLFY). Residues 29–116 (NQDVVHNWSS…AHPSSSNVNL (88 aa)) are Lumenal-facing. Residues 117-137 (VSWLSNLLLPLILIITLFFFF) traverse the membrane as a helical segment. At 138–614 (RRGNKSSSGP…EFMRIVEERV (477 aa)) the chain is on the stromal side. ATP is bound at residue 211–218 (GPPGTGKT). H432 is a Zn(2+) binding site. E433 is a catalytic residue. Residues H436 and D510 each contribute to the Zn(2+) site.

In the central section; belongs to the AAA ATPase family. This sequence in the C-terminal section; belongs to the peptidase M41 family. In terms of assembly, homohexamer. Requires Zn(2+) as cofactor.

It localises to the plastid. Its subcellular location is the chloroplast thylakoid membrane. In terms of biological role, acts as a processive, ATP-dependent zinc metallopeptidase. The protein is ATP-dependent zinc metalloprotease FtsH of Cyanidium caldarium (Red alga).